The primary structure comprises 418 residues: MAGRLPACVVDCGTGYTKLGYAGNTEPQFIIPSCIAIKESAKVVDQAQRRVLKGVDDLDFFIGDEAIEKPTYATKWPIRHGIVEDWDLMERFMEQVIFKYLRAEPEDHYFLLTEPPLNTPENREYTAEIMFESFNVPGLYIAVQAVLALAASWTSRQVGERTLTGTVIDSGDGVTHVIPVAEGYVIGSCIKHIPIAGRDITYFIQQLLREREVGIPPEQSLETAKAVKERFSYVCPDLVKEFNKYDTDGTKWIKQYTGINAISKKEFTIDVGYERFLGPEIFFHPEFANPDFTQPISEVVDEVIQNCPIDVRRPLYKNIVLSGGSTMFRDFGRRLQRDLKRTVDARLKLSEELSGGRLKPKPIDVQVITHHMQRYAVWFGGSMLASTPEFYQVCHTKKDYEEIGPSICRHNPVFGVMS.

Ala-2 bears the N-acetylalanine mark.

It belongs to the actin family. ARP3 subfamily. Component of the Arp2/3 complex composed of ACTR2/ARP2, ACTR3/ARP3, ARPC1B/p41-ARC, ARPC2/p34-ARC, ARPC3/p21-ARC, ARPC4/p20-ARC and ARPC5/p16-ARC. In terms of tissue distribution, detected in fibroblasts.

It localises to the cytoplasm. Its subcellular location is the cytoskeleton. The protein resides in the cell projection. It is found in the nucleus. Its function is as follows. ATP-binding component of the Arp2/3 complex, a multiprotein complex that mediates actin polymerization upon stimulation by nucleation-promoting factor (NPF). The Arp2/3 complex mediates the formation of branched actin networks in the cytoplasm, providing the force for cell motility. Seems to contact the pointed end of the daughter actin filament. In addition to its role in the cytoplasmic cytoskeleton, the Arp2/3 complex also promotes actin polymerization in the nucleus, thereby regulating gene transcription and repair of damaged DNA. The Arp2/3 complex promotes homologous recombination (HR) repair in response to DNA damage by promoting nuclear actin polymerization, leading to drive motility of double-strand breaks (DSBs). This chain is Actin-related protein 3 (ACTR3), found in Gallus gallus (Chicken).